Reading from the N-terminus, the 96-residue chain is Small ribosomal subunit protein bS18 (96 aa).

The segment covering 1-22 has biased composition (basic and acidic residues); sequence MYKDVDSHQRDSRSDGHQDGFK. The tract at residues 1–25 is disordered; sequence MYKDVDSHQRDSRSDGHQDGFKKNP.

The protein belongs to the bacterial ribosomal protein bS18 family. In terms of assembly, part of the 30S ribosomal subunit. Forms a tight heterodimer with protein bS6.

In terms of biological role, binds as a heterodimer with protein bS6 to the central domain of the 16S rRNA, where it helps stabilize the platform of the 30S subunit. This is Small ribosomal subunit protein bS18 from Borrelia hermsii (strain HS1 / DAH).